We begin with the raw amino-acid sequence, 357 residues long: Serpentine receptor class epsilon-31 (357 aa).

Helical transmembrane passes span 28 to 48 (VISIFELLSYILCGYILNLSI), 61 to 81 (LMFLTVPLFAIWYELIIGKFI), 121 to 141 (LLIFGGFLQWHTIYSIVFGIL), 165 to 185 (IPIFLIIICQVLAIFMTFIVI), 192 to 212 (IIARLPFIFLCPISFAVWLFV), 253 to 273 (LVAVVLVYIMVCFLGIVSLTF), and 283 to 303 (FVENFLFFHPIPICLTAMFSI).

It belongs to the nematode receptor-like protein sre family.

It localises to the membrane. In Caenorhabditis elegans, this protein is Serpentine receptor class epsilon-31 (sre-31).